The following is a 491-amino-acid chain: 3-epi-6-deoxocathasterone 23-monooxygenase CYP90D1 (491 aa).

The chain crosses the membrane as a helical span at residues 7–27 (LLFFSFFFFIIIVIFNKINGL). Cysteine 442 contributes to the heme binding site.

The protein belongs to the cytochrome P450 family. The cofactor is heme. Expressed in leaf vascular tissue.

The protein localises to the endoplasmic reticulum membrane. It catalyses the reaction 3-epi-6-deoxocathasterone + reduced [NADPH--hemoprotein reductase] + O2 = 6-deoxotyphasterol + oxidized [NADPH--hemoprotein reductase] + H2O + H(+). The enzyme catalyses (22S,24R)-22-hydroxy-5alpha-ergostan-3-one + reduced [NADPH--hemoprotein reductase] + O2 = 3-dehydro-6-deoxoteasterone + oxidized [NADPH--hemoprotein reductase] + H2O + H(+). The protein operates within plant hormone biosynthesis; brassinosteroid biosynthesis. Its function is as follows. Involved in brassinosteroid (BR) biosynthesis. May convert teasterone (TE) to 3-dehydroteasterone (3DT, 3-DHT), or 6-deoxoteasterone (6-deoxoTE) to 3-dehydro-6-deoxoteasterone (6-deoxo3DT, 6-deoxo3DHT). C-23 hydroxylase that converts directly (22S,24R)-22-hydroxy-5-alpha-ergostan-3-one and 3-epi-6-deoxocathasterone to 3-dehydro-6-deoxoteasterone (6-deoxo3DT, 6-deoxo3DHT) and 6-deoxotyphasterol (6-deoxoTY), respectively. These C-23 hydroxylation shortcuts bypass campestanol, 6-deoxocathasterone, and 6-deoxoteasterone (6-deoxoTE). Also catalyzes the conversion of cathasterone to teasterone (TE), 6-deoxotyphasterol (6-deoxoTY) to 6-deoxocathasterone (6-deoxoCT), (22S,24R)-22-hydroxyergost-4-en-3-one (22-OH-4-en-3-one) to (22R,23R)-22,23-dihydroxy-campest-4-en-3-one (22,23-diOH-4-en-3-one) and (22S)-22-hydroxycampesterol (22-OHCR) to (22R,23R)-22,23-dihydroxycampesterol (22,23-diOHCR). This Arabidopsis thaliana (Mouse-ear cress) protein is 3-epi-6-deoxocathasterone 23-monooxygenase CYP90D1.